The primary structure comprises 525 residues: NGFI-A-binding protein 2 (525 aa).

The tract at residues 1 to 31 (MHRAPSPTAEQPPGRGDNTRRTPQPRFKASA) is disordered. Ser6 carries the phosphoserine modification. Residues 35–113 (ALPRTLGELQ…REWATNPGLF (79 aa)) are NCD1. The segment at 135–238 (GTRKGSMSNG…GAGGGPDRLE (104 aa)) is disordered. Ser157, Ser159, Ser162, and Ser171 each carry phosphoserine. The span at 212 to 234 (AGGGVSEGPGVGGVAAGGAGGGP) shows a compositional bias: gly residues. Positions 267–356 (LLKLNKKLAR…SRQVARESTY (90 aa)) are NCD2. The interval 353–384 (ESTYLSSLKGSRLHSEELGGPPLKKLKQEVGE) is necessary for nuclear localization. Residue Lys379 forms a Glycyl lysine isopeptide (Lys-Gly) (interchain with G-Cter in SUMO1) linkage. The tract at residues 381–416 (EVGEQSHNEIQQPPPGPESYAPPYRPSLEEDSASLS) is disordered. Ser479 bears the Phosphoserine mark. Residues 501 to 525 (APGPHPALVEGRRSSVKVEAEASRQ) are disordered. Residues 510-525 (EGRRSSVKVEAEASRQ) show a composition bias toward basic and acidic residues. Lys517 participates in a covalent cross-link: Glycyl lysine isopeptide (Lys-Gly) (interchain with G-Cter in SUMO1); alternate. Residue Lys517 forms a Glycyl lysine isopeptide (Lys-Gly) (interchain with G-Cter in SUMO2); alternate linkage.

The protein belongs to the NAB family. In terms of assembly, homomultimers may associate with EGR1 bound to DNA. In terms of processing, sumoylation by EGR2 represses EGR2 transcriptional activity in hindbrain. As to expression, highly expressed in brain and thymus, and at lower levels in spleen, kidney, heart and testis. Isoform 1 is predominantly expressed in testis, whereas isoform 3 is more abundant in thymus.

The protein localises to the nucleus. Functionally, acts as a transcriptional repressor for zinc finger transcription factors EGR1 and EGR2. Isoform 2 lacks repression ability. In Mus musculus (Mouse), this protein is NGFI-A-binding protein 2 (Nab2).